A 615-amino-acid chain; its full sequence is 1-deoxy-D-xylulose-5-phosphate synthase (615 aa).

Thiamine diphosphate contacts are provided by residues His-76 and 117-119 (GHS). Asp-148 provides a ligand contact to Mg(2+). Residues 149–150 (GA), Asn-177, Tyr-284, and Glu-365 each bind thiamine diphosphate. Mg(2+) is bound at residue Asn-177.

This sequence belongs to the transketolase family. DXPS subfamily. As to quaternary structure, homodimer. The cofactor is Mg(2+). Thiamine diphosphate is required as a cofactor.

The enzyme catalyses D-glyceraldehyde 3-phosphate + pyruvate + H(+) = 1-deoxy-D-xylulose 5-phosphate + CO2. It participates in metabolic intermediate biosynthesis; 1-deoxy-D-xylulose 5-phosphate biosynthesis; 1-deoxy-D-xylulose 5-phosphate from D-glyceraldehyde 3-phosphate and pyruvate: step 1/1. Functionally, catalyzes the acyloin condensation reaction between C atoms 2 and 3 of pyruvate and glyceraldehyde 3-phosphate to yield 1-deoxy-D-xylulose-5-phosphate (DXP). The sequence is that of 1-deoxy-D-xylulose-5-phosphate synthase from Francisella tularensis subsp. holarctica (strain FTNF002-00 / FTA).